We begin with the raw amino-acid sequence, 690 residues long: Proprotein convertase subtilisin/kexin type 9 (690 aa).

A signal peptide spans 1-28; that stretch reads MGTVSSRRSWWPLPLLLLLLLGPAGARA. The propeptide occupies 29-150; the sequence is QEDEDGDYEE…IEEDSSVFAQ (122 aa). Y36 is subject to Sulfotyrosine. S45 bears the Phosphoserine mark. One can recognise an Inhibitor I9 domain in the interval 75 to 147; it reads TYVVVLKEET…VDYIEEDSSV (73 aa). Residues 153–459 form the Peptidase S8 domain; that stretch reads PWNLERITPP…GWQLFCRTVW (307 aa). Residues D184 and H224 each act as charge relay system in the active site. Cystine bridges form between C221-C253 and C321-C356. The Charge relay system role is filled by S384. The segment at 448 to 690 is C-terminal domain; sequence GAGWQLFCRT…HLVQASQELQ (243 aa). 3 cysteine pairs are disulfide-bonded: C455/C525, C475/C524, and C484/C507. N-linked (GlcNAc...) asparagine glycosylation occurs at N531. Intrachain disulfides connect C532–C599, C550–C598, C560–C586, C606–C677, C624–C676, and C633–C652. Residue S686 is modified to Phosphoserine.

It belongs to the peptidase S8 family. In terms of assembly, monomer. Can self-associate to form dimers and higher multimers which may have increased LDLR degrading activity. The precursor protein but not the mature protein may form multimers. Interacts with APOB, VLDLR, LRP8/APOER2 and BACE1. The full-length immature form (pro-PCSK9) interacts with SCNN1A, SCNN1B and SCNN1G. The pro-PCSK9 form (via C-terminal domain) interacts with LDLR. Interacts (via the C-terminal domain) with ANXA2 (via repeat Annexin 1); the interaction inhibits the degradation of LDLR. The cofactor is Ca(2+). Cleavage by furin and PCSK5 generates a truncated inactive protein that is unable to induce LDLR degradation. In terms of processing, undergoes autocatalytic cleavage in the endoplasmic reticulum to release the propeptide from the N-terminus and the cleavage of the propeptide is strictly required for its maturation and activation. The cleaved propeptide however remains associated with the catalytic domain through non-covalent interactions, preventing potential substrates from accessing its active site. As a result, it is secreted from cells as a propeptide-containing, enzymatically inactive protein. Post-translationally, phosphorylation protects the propeptide against proteolysis.

The protein localises to the cytoplasm. It is found in the secreted. Its subcellular location is the endosome. The protein resides in the lysosome. It localises to the cell surface. The protein localises to the endoplasmic reticulum. It is found in the golgi apparatus. With respect to regulation, its proteolytic activity is autoinhibited by the non-covalent binding of the propeptide to the catalytic domain. Inhibited by EGTA. Functionally, crucial player in the regulation of plasma cholesterol homeostasis. Binds to low-density lipid receptor family members: low density lipoprotein receptor (LDLR), very low density lipoprotein receptor (VLDLR), apolipoprotein E receptor (LRP1/APOER) and apolipoprotein receptor 2 (LRP8/APOER2), and promotes their degradation in intracellular acidic compartments. Acts via a non-proteolytic mechanism to enhance the degradation of the hepatic LDLR through a clathrin LDLRAP1/ARH-mediated pathway. May prevent the recycling of LDLR from endosomes to the cell surface or direct it to lysosomes for degradation. Can induce ubiquitination of LDLR leading to its subsequent degradation. Inhibits intracellular degradation of APOB via the autophagosome/lysosome pathway in a LDLR-independent manner. Involved in the disposal of non-acetylated intermediates of BACE1 in the early secretory pathway. Inhibits epithelial Na(+) channel (ENaC)-mediated Na(+) absorption by reducing ENaC surface expression primarily by increasing its proteasomal degradation. Regulates neuronal apoptosis via modulation of LRP8/APOER2 levels and related anti-apoptotic signaling pathways. The sequence is that of Proprotein convertase subtilisin/kexin type 9 (PCSK9) from Gorilla gorilla gorilla (Western lowland gorilla).